The primary structure comprises 417 residues: Serine hydroxymethyltransferase (417 aa).

Residues L120 and 124 to 126 contribute to the (6S)-5,6,7,8-tetrahydrofolate site; that span reads GHL. K229 is modified (N6-(pyridoxal phosphate)lysine).

It belongs to the SHMT family. Homodimer. The cofactor is pyridoxal 5'-phosphate.

The protein resides in the cytoplasm. The catalysed reaction is (6R)-5,10-methylene-5,6,7,8-tetrahydrofolate + glycine + H2O = (6S)-5,6,7,8-tetrahydrofolate + L-serine. It functions in the pathway one-carbon metabolism; tetrahydrofolate interconversion. It participates in amino-acid biosynthesis; glycine biosynthesis; glycine from L-serine: step 1/1. Its function is as follows. Catalyzes the reversible interconversion of serine and glycine with tetrahydrofolate (THF) serving as the one-carbon carrier. This reaction serves as the major source of one-carbon groups required for the biosynthesis of purines, thymidylate, methionine, and other important biomolecules. Also exhibits THF-independent aldolase activity toward beta-hydroxyamino acids, producing glycine and aldehydes, via a retro-aldol mechanism. This chain is Serine hydroxymethyltransferase, found in Anaeromyxobacter dehalogenans (strain 2CP-1 / ATCC BAA-258).